Reading from the N-terminus, the 248-residue chain is Tabserin (248 aa).

A signal peptide spans 1-19; sequence MLKYSALFLYLIYVGGSES. Residues 24–248 enclose the Peptidase S1 domain; that stretch reads IVGGVPVAEE…PYFENGLRKR (225 aa). Cys49 and Cys65 are joined by a disulfide. Active-site charge relay system residues include His64 and Asp111. 2 disulfide bridges follow: Cys175–Cys189 and Cys201–Cys226. Catalysis depends on Ser205, which acts as the Charge relay system.

The protein belongs to the peptidase S1 family. In terms of tissue distribution, expressed in salivary glands.

It localises to the secreted. In terms of biological role, serine protease that inhibits blood coagulation in a dose-dependent manner. May act by destroying coagulant factors to inhibit blood coagulation. In Tabanus yao (Horsefly), this protein is Tabserin.